Reading from the N-terminus, the 465-residue chain is tRNA modification GTPase MnmE (465 aa).

The (6S)-5-formyl-5,6,7,8-tetrahydrofolate site is built by Arg25, Glu87, and Arg126. Residues 222 to 386 enclose the TrmE-type G domain; the sequence is TIRVVLRGLP…LIERLVQFAE (165 aa). GTP is bound by residues 232 to 237, 251 to 257, and 276 to 279; these read NAGKSR, TDQAGTT, and DTAG. 2 residues coordinate Mg(2+): Ser236 and Thr257. (6S)-5-formyl-5,6,7,8-tetrahydrofolate is bound at residue Lys465.

It belongs to the TRAFAC class TrmE-Era-EngA-EngB-Septin-like GTPase superfamily. TrmE GTPase family. Homodimer. Heterotetramer of two MnmE and two MnmG subunits. The cofactor is K(+).

The protein resides in the cytoplasm. In terms of biological role, exhibits a very high intrinsic GTPase hydrolysis rate. Involved in the addition of a carboxymethylaminomethyl (cmnm) group at the wobble position (U34) of certain tRNAs, forming tRNA-cmnm(5)s(2)U34. This chain is tRNA modification GTPase MnmE, found in Rhodopirellula baltica (strain DSM 10527 / NCIMB 13988 / SH1).